The following is a 311-amino-acid chain: Putative prophage capsid protein YqbE (311 aa).

The protein belongs to the encapsulin family. Family 3 subfamily.

Possibly a prophage capsid protein. This chain is Putative prophage capsid protein YqbE (yqbE), found in Bacillus subtilis (strain 168).